The chain runs to 217 residues: Thiamine-phosphate synthase (217 aa).

4-amino-2-methyl-5-(diphosphooxymethyl)pyrimidine is bound by residues 39 to 43 and Asn71; that span reads QYRDK. Asp72 and Asp91 together coordinate Mg(2+). Thr110 is a binding site for 4-amino-2-methyl-5-(diphosphooxymethyl)pyrimidine. 137 to 139 is a 2-[(2R,5Z)-2-carboxy-4-methylthiazol-5(2H)-ylidene]ethyl phosphate binding site; it reads SHT. Lys140 serves as a coordination point for 4-amino-2-methyl-5-(diphosphooxymethyl)pyrimidine. Gly167 serves as a coordination point for 2-[(2R,5Z)-2-carboxy-4-methylthiazol-5(2H)-ylidene]ethyl phosphate.

Belongs to the thiamine-phosphate synthase family. Mg(2+) serves as cofactor.

It catalyses the reaction 2-[(2R,5Z)-2-carboxy-4-methylthiazol-5(2H)-ylidene]ethyl phosphate + 4-amino-2-methyl-5-(diphosphooxymethyl)pyrimidine + 2 H(+) = thiamine phosphate + CO2 + diphosphate. The catalysed reaction is 2-(2-carboxy-4-methylthiazol-5-yl)ethyl phosphate + 4-amino-2-methyl-5-(diphosphooxymethyl)pyrimidine + 2 H(+) = thiamine phosphate + CO2 + diphosphate. It carries out the reaction 4-methyl-5-(2-phosphooxyethyl)-thiazole + 4-amino-2-methyl-5-(diphosphooxymethyl)pyrimidine + H(+) = thiamine phosphate + diphosphate. It functions in the pathway cofactor biosynthesis; thiamine diphosphate biosynthesis; thiamine phosphate from 4-amino-2-methyl-5-diphosphomethylpyrimidine and 4-methyl-5-(2-phosphoethyl)-thiazole: step 1/1. In terms of biological role, condenses 4-methyl-5-(beta-hydroxyethyl)thiazole monophosphate (THZ-P) and 2-methyl-4-amino-5-hydroxymethyl pyrimidine pyrophosphate (HMP-PP) to form thiamine monophosphate (TMP). This is Thiamine-phosphate synthase from Alcanivorax borkumensis (strain ATCC 700651 / DSM 11573 / NCIMB 13689 / SK2).